Reading from the N-terminus, the 160-residue chain is Cytochrome b6-f complex subunit 4 (160 aa).

Helical transmembrane passes span 36 to 56, 95 to 115, and 131 to 151; these read LLYI…GLSV, LLGV…PFIE, and TVFL…ALPI.

Belongs to the cytochrome b family. PetD subfamily. As to quaternary structure, the 4 large subunits of the cytochrome b6-f complex are cytochrome b6, subunit IV (17 kDa polypeptide, petD), cytochrome f and the Rieske protein, while the 4 small subunits are petG, petL, petM and petN. The complex functions as a dimer.

Its subcellular location is the plastid. It localises to the chloroplast thylakoid membrane. Functionally, component of the cytochrome b6-f complex, which mediates electron transfer between photosystem II (PSII) and photosystem I (PSI), cyclic electron flow around PSI, and state transitions. The polypeptide is Cytochrome b6-f complex subunit 4 (Chaetosphaeridium globosum (Charophycean green alga)).